Reading from the N-terminus, the 212-residue chain is Small ribosomal subunit protein uS5 (212 aa).

The 64-residue stretch at 48–111 (LEDEVLDINM…DIAKLNIIDV (64 aa)) folds into the S5 DRBM domain.

It belongs to the universal ribosomal protein uS5 family. In terms of assembly, part of the 30S ribosomal subunit. Contacts protein S4.

Functionally, with S4 and S12 plays an important role in translational accuracy. The polypeptide is Small ribosomal subunit protein uS5 (Haloarcula marismortui (strain ATCC 43049 / DSM 3752 / JCM 8966 / VKM B-1809) (Halobacterium marismortui)).